We begin with the raw amino-acid sequence, 265 residues long: NAD kinase (265 aa).

The active-site Proton acceptor is Asp-45. NAD(+) contacts are provided by residues 45–46 (DG), 121–122 (NE), Arg-147, Asp-149, 160–165 (TAYSKS), Ala-184, and Gln-222.

Belongs to the NAD kinase family. It depends on a divalent metal cation as a cofactor.

The protein localises to the cytoplasm. It carries out the reaction NAD(+) + ATP = ADP + NADP(+) + H(+). In terms of biological role, involved in the regulation of the intracellular balance of NAD and NADP, and is a key enzyme in the biosynthesis of NADP. Catalyzes specifically the phosphorylation on 2'-hydroxyl of the adenosine moiety of NAD to yield NADP. In Lacticaseibacillus paracasei (strain ATCC 334 / BCRC 17002 / CCUG 31169 / CIP 107868 / KCTC 3260 / NRRL B-441) (Lactobacillus paracasei), this protein is NAD kinase.